Consider the following 880-residue polypeptide: Leucine--tRNA ligase (880 aa).

Positions 46-56 match the 'HIGH' region motif; the sequence is PYPSGALHMGH. Positions 638 to 642 match the 'KMSKS' region motif; sequence KMSKS. Position 641 (K641) interacts with ATP.

Belongs to the class-I aminoacyl-tRNA synthetase family.

It localises to the cytoplasm. It carries out the reaction tRNA(Leu) + L-leucine + ATP = L-leucyl-tRNA(Leu) + AMP + diphosphate. The protein is Leucine--tRNA ligase of Xanthomonas euvesicatoria pv. vesicatoria (strain 85-10) (Xanthomonas campestris pv. vesicatoria).